A 179-amino-acid chain; its full sequence is MSSRVLTPDVVGIDALVHDHQTVLAKAEGGVVAVFDNNAPAFYAVTPARLAELLALEEKLARPGSDVALDDQLYQEPQTAPVAVPMGKFAMYPDWQPDADFIRLAALWGVALREPVTAEELASFIAYWQAEGKVFHHVQWQQKLARSLQIGRASNGGLPKRDVNTVSEPDSQIPPGFRG.

Positions 156–179 are disordered; the sequence is GGLPKRDVNTVSEPDSQIPPGFRG.

It belongs to the DnaT family. Homooligomerizes. Interacts with PriB. Component of the replication restart primosome. Primosome assembly occurs via a 'hand-off' mechanism. PriA binds to replication forks, subsequently PriB then DnaT bind; DnaT then displaces ssDNA to generate the helicase loading substrate.

Involved in the restart of stalled replication forks, which reloads the replicative helicase on sites other than the origin of replication. Can function in multiple replication restart pathways. Displaces ssDNA from a PriB-ssDNA complex. Probably forms a spiral filament on ssDNA. In Escherichia coli O81 (strain ED1a), this protein is Replication restart protein DnaT.